The primary structure comprises 283 residues: Alkaline ceramidase (283 aa).

Ca(2+) contacts are provided by D28, W29, E31, N33, and E42. 2 helical membrane-spanning segments follow: residues F43 to F63 and F69 to M89. H92 contributes to the Zn(2+) binding site. The next 4 helical transmembrane spans lie at I98–F118, T134–W151, P154–T174, and L187–C209. Positions 221 and 225 each coordinate Zn(2+). Residues G222–F242 traverse the membrane as a helical segment.

It belongs to the alkaline ceramidase family. Requires Zn(2+) as cofactor. In terms of tissue distribution, expressed in the central midgut of late embryos. In brain, it is present at the interhemispheric junction and in groups of cells in the central brain.

It localises to the membrane. It carries out the reaction an N-acylsphing-4-enine + H2O = sphing-4-enine + a fatty acid. Hydrolyzes the sphingolipid ceramide into sphingosine and free fatty acid. This chain is Alkaline ceramidase (bwa), found in Drosophila melanogaster (Fruit fly).